The sequence spans 327 residues: Cell division protein ZipA (327 aa).

Topologically, residues 1-5 are periplasmic; sequence MQDLR. The chain crosses the membrane as a helical span at residues 6-26; it reads LILIVVGAIAIIALLLHGLWT. At 27 to 327 the chain is on the cytoplasmic side; that stretch reads SRKERSSLFR…REVLDANTIA (301 aa). Residues 60–71 show a composition bias toward basic and acidic residues; it reads GEVRVRTSHPQE. Residues 60-182 form a disordered region; sequence GEVRVRTSHP…EPVAPAPEAK (123 aa). Polar residues-rich tracts occupy residues 94 to 103 and 163 to 173; these read KSAQVKTASR and APQQHVESQQE.

This sequence belongs to the ZipA family. In terms of assembly, interacts with FtsZ via their C-terminal domains.

The protein resides in the cell inner membrane. Its function is as follows. Essential cell division protein that stabilizes the FtsZ protofilaments by cross-linking them and that serves as a cytoplasmic membrane anchor for the Z ring. Also required for the recruitment to the septal ring of downstream cell division proteins. This is Cell division protein ZipA from Yersinia pseudotuberculosis serotype O:1b (strain IP 31758).